Reading from the N-terminus, the 185-residue chain is Transcription antitermination protein NusB (185 aa).

It belongs to the NusB family.

Its function is as follows. Involved in transcription antitermination. Required for transcription of ribosomal RNA (rRNA) genes. Binds specifically to the boxA antiterminator sequence of the ribosomal RNA (rrn) operons. The polypeptide is Transcription antitermination protein NusB (Rhodospirillum rubrum (strain ATCC 11170 / ATH 1.1.1 / DSM 467 / LMG 4362 / NCIMB 8255 / S1)).